A 526-amino-acid polypeptide reads, in one-letter code: Dolichyl pyrophosphate Glc1Man9GlcNAc2 alpha-1,3-glucosyltransferase (526 aa).

11 helical membrane passes run 4-24, 103-122, 143-163, 188-208, 238-258, 334-354, 368-388, 389-409, 427-449, 461-481, and 488-508; these read FGIA…VTLL, LLFQ…YAVH, FILS…HIHF, GAFL…VAPA, LISL…PFLA, PLAT…CLWC, LCAL…ILLA, VLPM…FLIL, LPIK…KTLF, TFYL…FPFT, and PFIP…YAWL.

The protein belongs to the ALG6/ALG8 glucosyltransferase family.

Its subcellular location is the endoplasmic reticulum membrane. The catalysed reaction is an alpha-D-Glc-(1-&gt;3)-alpha-D-Man-(1-&gt;2)-alpha-D-Man-(1-&gt;2)-alpha-D-Man-(1-&gt;3)-[alpha-D-Man-(1-&gt;2)-alpha-D-Man-(1-&gt;3)-[alpha-D-Man-(1-&gt;2)-alpha-D-Man-(1-&gt;6)]-alpha-D-Man-(1-&gt;6)]-beta-D-Man-(1-&gt;4)-beta-D-GlcNAc-(1-&gt;4)-alpha-D-GlcNAc-diphospho-di-trans,poly-cis-dolichol + a di-trans,poly-cis-dolichyl beta-D-glucosyl phosphate = an alpha-D-Glc-(1-&gt;3)-alpha-D-Glc-(1-&gt;3)-alpha-D-Man-(1-&gt;2)-alpha-D-Man-(1-&gt;2)-alpha-D-Man-(1-&gt;3)-[alpha-D-Man-(1-&gt;2)-alpha-D-Man-(1-&gt;3)-[alpha-D-Man-(1-&gt;2)-alpha-D-Man-(1-&gt;6)]-alpha-D-Man-(1-&gt;6)]-beta-D-Man-(1-&gt;4)-beta-D-GlcNAc-(1-&gt;4)-alpha-D-GlcNAc-diphospho-di-trans,poly-cis-dolichol + a di-trans,poly-cis-dolichyl phosphate + H(+). The protein operates within protein modification; protein glycosylation. In terms of biological role, dolichyl pyrophosphate Glc1Man9GlcNAc2 alpha-1,3-glucosyltransferase that operates in the biosynthetic pathway of dolichol-linked oligosaccharides, the glycan precursors employed in protein asparagine (N)-glycosylation. The assembly of dolichol-linked oligosaccharides begins on the cytosolic side of the endoplasmic reticulum membrane and finishes in its lumen. The sequential addition of sugars to dolichol pyrophosphate produces dolichol-linked oligosaccharides containing fourteen sugars, including two GlcNAcs, nine mannoses and three glucoses. Once assembled, the oligosaccharide is transferred from the lipid to nascent proteins by oligosaccharyltransferases. In the lumen of the endoplasmic reticulum, adds the second glucose residue from dolichyl phosphate glucose (Dol-P-Glc) onto the lipid-linked oligosaccharide intermediate Glc(1)Man(9)GlcNAc(2)-PP-Dol to produce Glc(2)Man(9)GlcNAc(2)-PP-Dol. Glc(2)Man(9)GlcNAc(2)-PP-Dol is a substrate for ALG10, the following enzyme in the biosynthetic pathway. Required for PKD1/Polycystin-1 maturation and localization to the plasma membrane of the primary cilia. The polypeptide is Dolichyl pyrophosphate Glc1Man9GlcNAc2 alpha-1,3-glucosyltransferase (Bos taurus (Bovine)).